A 202-amino-acid polypeptide reads, in one-letter code: Ribosome maturation factor RimM (202 aa).

The PRC barrel domain occupies 121-202; the sequence is ADEYYWVDLI…CITVDWQPDY (82 aa).

The protein belongs to the RimM family. Binds ribosomal protein uS19.

It localises to the cytoplasm. Functionally, an accessory protein needed during the final step in the assembly of 30S ribosomal subunit, possibly for assembly of the head region. Essential for efficient processing of 16S rRNA. May be needed both before and after RbfA during the maturation of 16S rRNA. It has affinity for free ribosomal 30S subunits but not for 70S ribosomes. The protein is Ribosome maturation factor RimM of Polaromonas naphthalenivorans (strain CJ2).